Consider the following 318-residue polypeptide: Taste receptor type 2 member 60 (318 aa).

Over 1–7 (MNGDHMV) the chain is Extracellular. A helical transmembrane segment spans residues 8–28 (LGSSVTDKKAIILVTILLLLR). Residues 29-40 (LVAIAGNGFITA) are Cytoplasmic-facing. A helical membrane pass occupies residues 41–61 (ALGVEWVLRRMLLPCDKLLVS). Residues 62–88 (LGASHFCLQSVVMGKTIYVFLYPMAFP) lie on the Extracellular side of the membrane. The chain crosses the membrane as a helical span at residues 89–109 (YNPVLQFLAFQWDFLNAATLW). At 110-128 (FSTWLSVFYCVKIATFTHP) the chain is on the cytoplasmic side. Residues 129-149 (VFFWLKHKLSGWLPWMVFSYV) traverse the membrane as a helical segment. Topologically, residues 150-183 (GLSSFTTILFFIGNHRMYQNYLKNHLQPWNVTGN) are extracellular. N-linked (GlcNAc...) asparagine glycosylation occurs at Asn179. Residues 184-204 (SIRSYCEKFYLFPLKMITWTM) form a helical membrane-spanning segment. The Cytoplasmic portion of the chain corresponds to 205–234 (PTAVFFICMILLITSLGRHMKKALLTTSGF). A helical membrane pass occupies residues 235 to 255 (REPSVQAHIKALLALLSFAML). Over 256 to 264 (FISYFLSLV) the chain is Extracellular. The helical transmembrane segment at 265 to 285 (FSAAGIFPPLDFKFWVWESVI) threads the bilayer. The Cytoplasmic segment spans residues 286–318 (YLCAAVHPIILLFSNCRLRAVLKSRRSSRCGTP).

It belongs to the G-protein coupled receptor T2R family.

The protein localises to the membrane. Functionally, receptor that may play a role in the perception of bitterness and is gustducin-linked. May play a role in sensing the chemical composition of the gastrointestinal content. The activity of this receptor may stimulate alpha gustducin, mediate PLC-beta-2 activation and lead to the gating of TRPM5. This Pan troglodytes (Chimpanzee) protein is Taste receptor type 2 member 60 (TAS2R60).